Here is a 336-residue protein sequence, read N- to C-terminus: Uridine nucleosidase 1 (336 aa).

Active-site residues include Asp29 and His260.

Belongs to the IUNH family. As to quaternary structure, homodimer. Component of the NSH heterocomplex made of URH1/NSH1 and URH2/NSH2 which exhibits strong xanthosine nucleosidase activity. Interacts with URH2. In terms of tissue distribution, expressed ubiquitously in leaves, flowers, stems, pollen cells, root tip meristem and root vasculature.

The protein localises to the cytoplasm. The catalysed reaction is uridine + H2O = D-ribose + uracil. It catalyses the reaction xanthosine + H2O = D-ribose + xanthine. It carries out the reaction inosine + H2O = hypoxanthine + D-ribose. The enzyme catalyses adenosine + H2O = D-ribose + adenine. Functionally, involved in purine and pyrimidine breakdown rather than in pyrimidine salvage, especially in response to dark stress. Together with URH2, required for efficient inosine and xanthosine hydrolytic activities. Unable to use cytidine as a substrate. Can use uridine, inosine, adenosine as well as the cytokinin derivative isopentenyladenine-riboside as substrates. Also hydrolyzes xanthosine with high efficiency. This Arabidopsis thaliana (Mouse-ear cress) protein is Uridine nucleosidase 1.